The chain runs to 83 residues: MSSGGLLLLLGLLTLWEVLTPVSSKDRPEFCELPADSGSCKGNFQAFYYNPVQHQCLEFIYGGCDGNANNFKTIDECKRTCAA.

The signal sequence occupies residues 1–24; sequence MSSGGLLLLLGLLTLWEVLTPVSS. In terms of domain architecture, BPTI/Kunitz inhibitor spans 31 to 81; it reads CELPADSGSCKGNFQAFYYNPVQHQCLEFIYGGCDGNANNFKTIDECKRTC. Cystine bridges form between C31–C81, C40–C64, and C56–C77.

The protein belongs to the venom Kunitz-type family. As to expression, expressed by the venom gland.

Its subcellular location is the secreted. Serine protease inhibitor. The chain is Kunitz-type serine protease inhibitor superbin-3 from Austrelaps superbus (Lowland copperhead snake).